Here is an 89-residue protein sequence, read N- to C-terminus: Small ribosomal subunit protein bS20 (89 aa).

It belongs to the bacterial ribosomal protein bS20 family.

In terms of biological role, binds directly to 16S ribosomal RNA. The polypeptide is Small ribosomal subunit protein bS20 (Phenylobacterium zucineum (strain HLK1)).